The following is a 400-amino-acid chain: MSDIISIKDIDLAKKKVFIRCDFNVPQDDFLNITDDRRIRSAIPTIRYCLDNGCSVILASHLGRPKEISSKYSLEPVAKRLARLLDKEIVMAKDVIGEDAKTKAMNLKAGEILLLENLRFEKGETKNDENLAKELASMVQVYINDAFGVCHRAHSSVEAITKFFDEKHKGAGFLLQKEIDFASNLIKHPARPFVAVVGGSKVSGKLQALTNLLPKVDKLIIGGGMAFTFLKALGYDIGNSLLEEELLEEANKILTKGKNLGVKIYLPVDVVAAPACSQDVPMKFVPAQEIPNGWMGLDIGPASVRLFKEVISDAQTIWWNGPMGVFEIDKFSKGSIKMSHYISEGHATSVVGGGDTADVVARAGDADEMTFISTGGGASLELIEGKELPGVKALRSKENE.

Residues 22–24 (DFN), Arg-38, 61–64 (HLGR), Arg-119, and Arg-152 each bind substrate. ATP is bound by residues Lys-205, Gly-296, Glu-327, and 353–356 (GGDT).

This sequence belongs to the phosphoglycerate kinase family. Monomer.

It is found in the cytoplasm. It carries out the reaction (2R)-3-phosphoglycerate + ATP = (2R)-3-phospho-glyceroyl phosphate + ADP. The protein operates within carbohydrate degradation; glycolysis; pyruvate from D-glyceraldehyde 3-phosphate: step 2/5. In Campylobacter jejuni subsp. jejuni serotype O:2 (strain ATCC 700819 / NCTC 11168), this protein is Phosphoglycerate kinase.